The sequence spans 228 residues: Cytidylate kinase (228 aa).

Position 7–15 (7–15 (GPVATGKST)) interacts with ATP.

It belongs to the cytidylate kinase family. Type 1 subfamily.

It localises to the cytoplasm. It carries out the reaction CMP + ATP = CDP + ADP. It catalyses the reaction dCMP + ATP = dCDP + ADP. The polypeptide is Cytidylate kinase (Protochlamydia amoebophila (strain UWE25)).